Here is a 199-residue protein sequence, read N- to C-terminus: Transgelin-3 (199 aa).

The Calponin-homology (CH) domain maps to 24–136 (ADLENKLVDW…RTLMALGSVA (113 aa)). Position 163 is a phosphoserine (Ser163). One copy of the Calponin-like repeat lies at 174–199 (IGLQMGSNKGASQAGMTGYGMPRQIM). Positions 176-188 (LQMGSNKGASQAG) are enriched in polar residues. A disordered region spans residues 176–199 (LQMGSNKGASQAGMTGYGMPRQIM).

Belongs to the calponin family.

This is Transgelin-3 (TAGLN3) from Pongo abelii (Sumatran orangutan).